Here is a 255-residue protein sequence, read N- to C-terminus: Hemin import ATP-binding protein HmuV (255 aa).

The 237-residue stretch at 2–238 folds into the ABC transporter domain; the sequence is LDVEGLHLKR…AALNAVFGID (237 aa). An ATP-binding site is contributed by 34–41; sequence GPNGAGKS.

This sequence belongs to the ABC transporter superfamily. Heme (hemin) importer (TC 3.A.1.14.5) family. As to quaternary structure, the complex is composed of two ATP-binding proteins (HmuV), two transmembrane proteins (HmuU) and a solute-binding protein (HmuT).

The protein localises to the cell inner membrane. In terms of biological role, part of the ABC transporter complex HmuTUV involved in hemin import. Responsible for energy coupling to the transport system. This chain is Hemin import ATP-binding protein HmuV, found in Pseudomonas entomophila (strain L48).